We begin with the raw amino-acid sequence, 89 residues long: MALTQERKNEIINQFKIHETDTGSPEVQVAILTEQINNLNDHLRVHRKDHHSRRGLLKMVGRRRNLLTYLRNKDINRYRELINKLGLRR.

This sequence belongs to the universal ribosomal protein uS15 family. In terms of assembly, part of the 30S ribosomal subunit. Forms a bridge to the 50S subunit in the 70S ribosome, contacting the 23S rRNA.

One of the primary rRNA binding proteins, it binds directly to 16S rRNA where it helps nucleate assembly of the platform of the 30S subunit by binding and bridging several RNA helices of the 16S rRNA. Functionally, forms an intersubunit bridge (bridge B4) with the 23S rRNA of the 50S subunit in the ribosome. The chain is Small ribosomal subunit protein uS15 from Anoxybacillus flavithermus (strain DSM 21510 / WK1).